Reading from the N-terminus, the 286-residue chain is Probable protein S-acyltransferase 16 (286 aa).

2 helical membrane-spanning segments follow: residues 11-31 (PVTV…FTFI) and 45-65 (NAAA…IAVF). A DHHC domain is found at 97–147 (RYCQKCSHFKPPRAHHCRVCKRCVLRMDHHCIWINNCVGHTNYKVFFVFVV). The S-palmitoyl cysteine intermediate role is filled by cysteine 127. 2 helical membrane passes run 141 to 161 (VFFV…VLLV) and 182 to 202 (IYVI…VLLG).

This sequence belongs to the DHHC palmitoyltransferase family.

It is found in the golgi apparatus membrane. It carries out the reaction L-cysteinyl-[protein] + hexadecanoyl-CoA = S-hexadecanoyl-L-cysteinyl-[protein] + CoA. In terms of biological role, palmitoyl acyltransferase. This chain is Probable protein S-acyltransferase 16 (PAT16), found in Arabidopsis thaliana (Mouse-ear cress).